Reading from the N-terminus, the 463-residue chain is ATP synthase subunit beta (463 aa).

152 to 159 (GGAGVGKT) is an ATP binding site.

The protein belongs to the ATPase alpha/beta chains family. In terms of assembly, F-type ATPases have 2 components, CF(1) - the catalytic core - and CF(0) - the membrane proton channel. CF(1) has five subunits: alpha(3), beta(3), gamma(1), delta(1), epsilon(1). CF(0) has three main subunits: a(1), b(2) and c(9-12). The alpha and beta chains form an alternating ring which encloses part of the gamma chain. CF(1) is attached to CF(0) by a central stalk formed by the gamma and epsilon chains, while a peripheral stalk is formed by the delta and b chains.

The protein localises to the cell membrane. The catalysed reaction is ATP + H2O + 4 H(+)(in) = ADP + phosphate + 5 H(+)(out). Its function is as follows. Produces ATP from ADP in the presence of a proton gradient across the membrane. The catalytic sites are hosted primarily by the beta subunits. This chain is ATP synthase subunit beta, found in Clostridium botulinum (strain Alaska E43 / Type E3).